A 325-amino-acid polypeptide reads, in one-letter code: Acetyl-coenzyme A carboxylase carboxyl transferase subunit alpha (325 aa).

Positions 35–292 (EIEKLEARLA…DRVLRRSLKQ (258 aa)) constitute a CoA carboxyltransferase C-terminal domain.

The protein belongs to the AccA family. Acetyl-CoA carboxylase is a heterohexamer composed of biotin carboxyl carrier protein (AccB), biotin carboxylase (AccC) and two subunits each of ACCase subunit alpha (AccA) and ACCase subunit beta (AccD).

The protein localises to the cytoplasm. The enzyme catalyses N(6)-carboxybiotinyl-L-lysyl-[protein] + acetyl-CoA = N(6)-biotinyl-L-lysyl-[protein] + malonyl-CoA. Its pathway is lipid metabolism; malonyl-CoA biosynthesis; malonyl-CoA from acetyl-CoA: step 1/1. In terms of biological role, component of the acetyl coenzyme A carboxylase (ACC) complex. First, biotin carboxylase catalyzes the carboxylation of biotin on its carrier protein (BCCP) and then the CO(2) group is transferred by the carboxyltransferase to acetyl-CoA to form malonyl-CoA. This is Acetyl-coenzyme A carboxylase carboxyl transferase subunit alpha from Geobacillus kaustophilus (strain HTA426).